The sequence spans 348 residues: Phosphoribosylformylglycinamidine cyclo-ligase (348 aa).

The protein belongs to the AIR synthase family.

Its subcellular location is the cytoplasm. The catalysed reaction is 2-formamido-N(1)-(5-O-phospho-beta-D-ribosyl)acetamidine + ATP = 5-amino-1-(5-phospho-beta-D-ribosyl)imidazole + ADP + phosphate + H(+). It functions in the pathway purine metabolism; IMP biosynthesis via de novo pathway; 5-amino-1-(5-phospho-D-ribosyl)imidazole from N(2)-formyl-N(1)-(5-phospho-D-ribosyl)glycinamide: step 2/2. This chain is Phosphoribosylformylglycinamidine cyclo-ligase, found in Geobacter sp. (strain M21).